A 536-amino-acid polypeptide reads, in one-letter code: Xylulose kinase (536 aa).

Substrate is bound by residues His99, Arg170, Asp280, and Asn281. Residues Trp355, Gly441 to Ala442, and Asn445 each bind ATP.

The protein belongs to the FGGY kinase family. In terms of assembly, monomer.

The enzyme catalyses D-xylulose + ATP = D-xylulose 5-phosphate + ADP + H(+). Its function is as follows. Phosphorylates D-xylulose to produce D-xylulose 5-phosphate, a molecule that may play an important role in the regulation of glucose metabolism and lipogenesis. This Rattus norvegicus (Rat) protein is Xylulose kinase (Xylb).